A 1035-amino-acid polypeptide reads, in one-letter code: FERM domain-containing protein 4B (1035 aa).

The FERM domain occupies 59–361 (RHCQVHLLDD…SQHQFYLDRK (303 aa)). Position 372 is a phosphoserine (serine 372). Coiled coils occupy residues 414–451 (QDSE…LKKI) and 535–559 (KQDY…RIRC). The segment at 542–972 (VKRLQEIENS…TQLTIGLSEY (431 aa)) is necessary for adherens junction and tight junction localization. 4 disordered regions span residues 563–615 (PSQK…ILPP), 631–699 (NEQF…LESQ), 713–738 (FTLS…SQSS), and 754–798 (TQTL…SKGQ). A compositionally biased stretch (low complexity) spans 571 to 590 (PPEDIIPSESSSLSDTTTYD). Residues 594-607 (DSFTLAGQRPSSVP) show a composition bias toward polar residues. The residue at position 609 (serine 609) is a Phosphoserine. Residues 635 to 644 (MDTRHSREML) show a composition bias toward basic and acidic residues. Polar residues-rich tracts occupy residues 664–699 (MPTT…LESQ) and 715–725 (LSKSQRSSSTE). A Phosphoserine modification is found at serine 698. The segment covering 762-771 (RGRRRSKKHS) has biased composition (basic residues). Residues 772-782 (VSTSNSGSMPN) show a composition bias toward polar residues. Lysine 883 is covalently cross-linked (Glycyl lysine isopeptide (Lys-Gly) (interchain with G-Cter in SUMO2)). Disordered stretches follow at residues 906–926 (RASG…SDRG), 939–958 (PCSP…TNAS), and 994–1035 (PSRQ…GTLV). Over residues 907-921 (ASGQKDQGHSPQTSF) the composition is skewed to polar residues. Serine 916 carries the post-translational modification Phosphoserine. Positions 941 to 958 (SPSSRASSYSSVSSTNAS) are enriched in low complexity. Positions 1019 to 1035 (SEQRLFWHEDSKPGTLV) are enriched in basic and acidic residues. Lysine 1030 is covalently cross-linked (Glycyl lysine isopeptide (Lys-Gly) (interchain with G-Cter in SUMO2)).

Interacts with CYTH3. Interacts with PARD3. Interacts with CYTH1. In terms of tissue distribution, isoform 1 is expressed in the brain. Isoform 2 is expressed in the lung (at protein level).

It is found in the cytoplasm. Its subcellular location is the cytoskeleton. It localises to the cell junction. The protein localises to the tight junction. The protein resides in the adherens junction. Functionally, member of GRP1 signaling complexes that are acutely recruited to plasma membrane ruffles in response to insulin receptor signaling. May function as a scaffolding protein that regulates epithelial cell polarity by connecting ARF6 activation with the PAR3 complex. Plays a redundant role with FRMD4A in epithelial polarization. The chain is FERM domain-containing protein 4B (Frmd4b) from Mus musculus (Mouse).